A 285-amino-acid chain; its full sequence is Isoprenyl transferase 2 (285 aa).

A disordered region spans residues 11 to 30; it reads RREYRAPEPHPSGARAPKLP. The active site involves D43. D43 contributes to the Mg(2+) binding site. Substrate-binding positions include 44-47, W48, R56, H60, and 88-90; these read GNGR and STE. N91 acts as the Proton acceptor in catalysis. Substrate-binding positions include W92, R94, R211, and 217 to 219; that span reads RTS. Residue E230 participates in Mg(2+) binding.

The protein belongs to the UPP synthase family. As to quaternary structure, homodimer. The cofactor is Mg(2+).

Functionally, catalyzes the condensation of isopentenyl diphosphate (IPP) with allylic pyrophosphates generating different type of terpenoids. This chain is Isoprenyl transferase 2, found in Streptomyces avermitilis (strain ATCC 31267 / DSM 46492 / JCM 5070 / NBRC 14893 / NCIMB 12804 / NRRL 8165 / MA-4680).